We begin with the raw amino-acid sequence, 320 residues long: ATP-dependent 6-phosphofructokinase (320 aa).

Gly-12 contributes to the ATP binding site. ADP contacts are provided by residues 22-26 (RGVVR) and 55-60 (RYSVSD). Residues 73–74 (RF) and 103–106 (GDGS) each bind ATP. Asp-104 provides a ligand contact to Mg(2+). 126-128 (TID) serves as a coordination point for substrate. Asp-128 serves as the catalytic Proton acceptor. Arg-155 is an ADP binding site. Substrate-binding positions include Arg-163 and 170-172 (MGR). ADP-binding positions include 186 to 188 (GCE), Lys-212, and 214 to 216 (KKH). Residues Glu-223, Arg-244, and 250–253 (HIQR) contribute to the substrate site.

This sequence belongs to the phosphofructokinase type A (PFKA) family. ATP-dependent PFK group I subfamily. Prokaryotic clade 'B1' sub-subfamily. As to quaternary structure, homotetramer. Mg(2+) serves as cofactor.

Its subcellular location is the cytoplasm. It catalyses the reaction beta-D-fructose 6-phosphate + ATP = beta-D-fructose 1,6-bisphosphate + ADP + H(+). It participates in carbohydrate degradation; glycolysis; D-glyceraldehyde 3-phosphate and glycerone phosphate from D-glucose: step 3/4. Allosterically activated by ADP and other diphosphonucleosides, and allosterically inhibited by phosphoenolpyruvate. Its function is as follows. Catalyzes the phosphorylation of D-fructose 6-phosphate to fructose 1,6-bisphosphate by ATP, the first committing step of glycolysis. The sequence is that of ATP-dependent 6-phosphofructokinase from Salmonella agona (strain SL483).